Consider the following 108-residue polypeptide: FK506-binding protein 1 (108 aa).

The PPIase FKBP-type domain occupies 20–108; that stretch reads GDSVTIHYVG…KFEVELLKIN (89 aa).

The protein belongs to the FKBP-type PPIase family. FKBP1 subfamily.

The protein resides in the cytoplasm. It carries out the reaction [protein]-peptidylproline (omega=180) = [protein]-peptidylproline (omega=0). Inhibited by both FK506 and rapamycin. Its function is as follows. PPIases accelerate the folding of proteins. It catalyzes the cis-trans isomerization of proline imidic peptide bonds in oligopeptides. This chain is FK506-binding protein 1 (FPR1), found in Cryptococcus neoformans var. neoformans serotype D (strain JEC21 / ATCC MYA-565) (Filobasidiella neoformans).